Here is a 269-residue protein sequence, read N- to C-terminus: Bis(5'-nucleosyl)-tetraphosphatase, symmetrical (269 aa).

It belongs to the Ap4A hydrolase family.

It carries out the reaction P(1),P(4)-bis(5'-adenosyl) tetraphosphate + H2O = 2 ADP + 2 H(+). Functionally, hydrolyzes diadenosine 5',5'''-P1,P4-tetraphosphate to yield ADP. The chain is Bis(5'-nucleosyl)-tetraphosphatase, symmetrical from Vibrio cholerae serotype O1 (strain ATCC 39541 / Classical Ogawa 395 / O395).